The sequence spans 379 residues: Cobalt-precorrin-5B C(1)-methyltransferase (379 aa).

Belongs to the CbiD family.

It carries out the reaction Co-precorrin-5B + S-adenosyl-L-methionine = Co-precorrin-6A + S-adenosyl-L-homocysteine. It participates in cofactor biosynthesis; adenosylcobalamin biosynthesis; cob(II)yrinate a,c-diamide from sirohydrochlorin (anaerobic route): step 6/10. Catalyzes the methylation of C-1 in cobalt-precorrin-5B to form cobalt-precorrin-6A. The chain is Cobalt-precorrin-5B C(1)-methyltransferase from Klebsiella pneumoniae subsp. pneumoniae (strain ATCC 700721 / MGH 78578).